The chain runs to 378 residues: Alcohol dehydrogenase 1 (378 aa).

Cys-48 is a Zn(2+) binding site. Position 49-53 (49-53 (HTDVL)) interacts with NAD(+). His-69, Cys-99, Cys-102, Cys-105, Cys-113, and Cys-177 together coordinate Zn(2+). Residues 202–207 (GIGTVG), Asp-226, Lys-231, 274–276 (TGV), 297–299 (IGA), and 321–323 (TTF) contribute to the NAD(+) site.

Belongs to the zinc-containing alcohol dehydrogenase family. Class-IV subfamily. Homodimer. Requires Zn(2+) as cofactor. As to expression, expressed in flowers and disk florets.

The protein operates within isoprenoid biosynthesis. This Tanacetum cinerariifolium (Dalmatian daisy) protein is Alcohol dehydrogenase 1.